Consider the following 454-residue polypeptide: Zinc finger CCCH domain-containing protein 66 (454 aa).

A compositionally biased stretch (gly residues) spans 1-23 (MAAGAGAGGGGGEGDSNGGGTSP). The tract at residues 1 to 30 (MAAGAGAGGGGGEGDSNGGGTSPGGVSAAA) is disordered. 5 C3H1-type zinc fingers span residues 66–94 (RIGEPDCSYYMRTGLCRFGMTCKFNHPPN), 111–139 (RVGQPECQYYLKTGTCKFGATCKFHHPRE), 157–185 (RPNEKECAYYLRTGQCKFASTCKFHHPQP), 318–346 (RPDQPECQFYMKTGDCKFGAVCKFHHPKE), and 364–392 (RPGEPVCTFYSRYGICKFGPNCKFDHPMG). The segment at 405 to 454 (DVSSMHYQLSPSPGHPGILLDGGSGRSHRVPQSDSQQIPSGDGNAEREAS) is disordered. Residues 434-443 (VPQSDSQQIP) are compositionally biased toward polar residues.

The chain is Zinc finger CCCH domain-containing protein 66 from Oryza sativa subsp. japonica (Rice).